Consider the following 104-residue polypeptide: Large ribosomal subunit protein uL24 (104 aa).

Positions 82 to 104 (RVGYRFDENGKKVRVSRRNGKDI) are disordered. Residues 93–104 (KVRVSRRNGKDI) show a composition bias toward basic residues.

It belongs to the universal ribosomal protein uL24 family. As to quaternary structure, part of the 50S ribosomal subunit.

Its function is as follows. One of two assembly initiator proteins, it binds directly to the 5'-end of the 23S rRNA, where it nucleates assembly of the 50S subunit. In terms of biological role, one of the proteins that surrounds the polypeptide exit tunnel on the outside of the subunit. The sequence is that of Large ribosomal subunit protein uL24 from Corynebacterium glutamicum (strain R).